We begin with the raw amino-acid sequence, 589 residues long: Alpha-1,2-mannosyltransferase MNN22 (589 aa).

Residues 1–16 (MGSIFKDGRRILVRPK) are Cytoplasmic-facing. A helical transmembrane segment spans residues 17–33 (SLIICLCLISIIFTQLI). Topologically, residues 34-589 (RYQYQLIADE…NTIAWLGKKT (556 aa)) are extracellular. Residues 50 to 77 (EDHSSSQSLKNTKLNSTRSSSPISPPKS) form a disordered region. Residues 54–71 (SSQSLKNTKLNSTRSSSP) show a composition bias toward polar residues. N-linked (GlcNAc...) asparagine glycans are attached at residues N64, N332, and N530.

It belongs to the MNN1/MNT family.

Its subcellular location is the golgi apparatus membrane. It participates in protein modification; protein glycosylation. In terms of biological role, alpha-1,2-mannosyltransferase required for cell wall integrity. Responsible for addition of the first alpha-1,2-linked mannose to form the branches on the mannan backbone of oligosaccharides. Addition of alpha-1,2-mannose is required for stabilization of the alpha-1,6-mannose backbone and hence regulates mannan fibril length; and is important for both immune recognition and virulence. In Candida albicans (strain SC5314 / ATCC MYA-2876) (Yeast), this protein is Alpha-1,2-mannosyltransferase MNN22 (MNN22).